We begin with the raw amino-acid sequence, 203 residues long: Superoxide dismutase [Mn] (203 aa).

4 residues coordinate Mn(2+): His27, His81, Asp167, and His171.

This sequence belongs to the iron/manganese superoxide dismutase family. In terms of assembly, homodimer. Mn(2+) serves as cofactor.

The catalysed reaction is 2 superoxide + 2 H(+) = H2O2 + O2. Functionally, destroys superoxide anion radicals which are normally produced within the cells and which are toxic to biological systems. This Buchnera aphidicola subsp. Acyrthosiphon pisum (strain APS) (Acyrthosiphon pisum symbiotic bacterium) protein is Superoxide dismutase [Mn] (sodA).